The sequence spans 202 residues: Peptidyl-tRNA hydrolase (202 aa).

Y16 provides a ligand contact to tRNA. H21 (proton acceptor) is an active-site residue. The tRNA site is built by Y68, N70, and N116.

This sequence belongs to the PTH family. As to quaternary structure, monomer.

It localises to the cytoplasm. It carries out the reaction an N-acyl-L-alpha-aminoacyl-tRNA + H2O = an N-acyl-L-amino acid + a tRNA + H(+). Functionally, hydrolyzes ribosome-free peptidyl-tRNAs (with 1 or more amino acids incorporated), which drop off the ribosome during protein synthesis, or as a result of ribosome stalling. Catalyzes the release of premature peptidyl moieties from peptidyl-tRNA molecules trapped in stalled 50S ribosomal subunits, and thus maintains levels of free tRNAs and 50S ribosomes. The sequence is that of Peptidyl-tRNA hydrolase from Treponema pallidum (strain Nichols).